The following is a 168-amino-acid chain: ATP synthase subunit b (168 aa).

The helical transmembrane segment at 9–29 (AIPFGTIAYTLFIFLLLLVML) threads the bilayer.

It belongs to the ATPase B chain family. In terms of assembly, F-type ATPases have 2 components, F(1) - the catalytic core - and F(0) - the membrane proton channel. F(1) has five subunits: alpha(3), beta(3), gamma(1), delta(1), epsilon(1). F(0) has three main subunits: a(1), b(2) and c(10-14). The alpha and beta chains form an alternating ring which encloses part of the gamma chain. F(1) is attached to F(0) by a central stalk formed by the gamma and epsilon chains, while a peripheral stalk is formed by the delta and b chains.

The protein localises to the cell membrane. In terms of biological role, f(1)F(0) ATP synthase produces ATP from ADP in the presence of a proton or sodium gradient. F-type ATPases consist of two structural domains, F(1) containing the extramembraneous catalytic core and F(0) containing the membrane proton channel, linked together by a central stalk and a peripheral stalk. During catalysis, ATP synthesis in the catalytic domain of F(1) is coupled via a rotary mechanism of the central stalk subunits to proton translocation. Functionally, component of the F(0) channel, it forms part of the peripheral stalk, linking F(1) to F(0). The protein is ATP synthase subunit b of Bacillus cereus (strain ATCC 10987 / NRS 248).